Consider the following 510-residue polypeptide: Serine/threonine protein phosphatase 2A 57 kDa regulatory subunit B' kappa isoform (510 aa).

Positions 1–51 are disordered; sequence MWKGFLSKLPRKTSASGRGADLDSGQCSNGAGNGNPIQRTSSCGSIPSGRS. Positions 25-51 are enriched in polar residues; that stretch reads GQCSNGAGNGNPIQRTSSCGSIPSGRS. 2 positions are modified to phosphothreonine: threonine 476 and threonine 493. Serine 502 bears the Phosphoserine mark. At threonine 508 the chain carries Phosphothreonine.

The protein belongs to the phosphatase 2A regulatory subunit B56 family. As to quaternary structure, PP2A consists of a common heteromeric enzyme, composed of a catalytic subunit (subunits C), a constant regulatory subunit (subunit A), and a variety of regulatory subunits such as subunits B (the R2/B/PR55/B55, R3/B''/PR72/PR130/PR59 and R5/B'/B56 families). Interacts with SIT1. Post-translationally, phosphorylated at Thr-476, Thr-493, Ser-502 and Thr-508 by SIT1. In terms of tissue distribution, expressed in root stele and epidermal cells.

The protein localises to the cytoplasm. The protein resides in the cytosol. Its subcellular location is the cell membrane. Its function is as follows. B regulatory subunit of phosphatase 2A (PP2A) involved in salt stress response. Under salt stress conditions, required for the catalytic activity of PP2A and the dephosphorylation of SIT1, a negative regulator of salt tolerance. Dephosphorylation of SIT1 turns off salt-induced SIT1 activity directly, which has a positive effect on salt tolerance. This Oryza sativa subsp. japonica (Rice) protein is Serine/threonine protein phosphatase 2A 57 kDa regulatory subunit B' kappa isoform.